The chain runs to 1657 residues: Alsin (1657 aa).

3 RCC1 repeats span residues 59–108, 109–167, and 169–218; these read DGEV…AVTD, NGVA…ALSI, and REIW…ALVQ. Residues 432 to 480 are disordered; that stretch reads TGAQAGSSAIGPEGLKDSREEQVKQESMQGKKSSSLVDIREEETEGGSR. Over residues 445-455 the composition is skewed to basic and acidic residues; it reads GLKDSREEQVK. Residues 456–467 are compositionally biased toward polar residues; sequence QESMQGKKSSSL. 4 positions are modified to phosphoserine: Ser465, Ser466, Ser483, and Ser492. Thr510 bears the Phosphothreonine mark. RCC1 repeat units follow at residues 525 to 576 and 578 to 627; these read RTEV…ALTA and SQVY…FLVD. At Lys533 the chain carries N6-acetyllysine. The DH domain maps to 690 to 885; that stretch reads GYIASLHELA…ECLALHLGRK (196 aa). The PH domain occupies 901-1007; that stretch reads GKMTDSLRKP…RAISQAVDQA (107 aa). 8 MORN repeats span residues 1049-1071, 1072-1094, 1100-1122, 1123-1145, 1151-1173, 1175-1197, 1198-1220, and 1221-1244; these read YDGR…DGKM, YSGM…NKAM, YVGH…SGEV, FEGC…KLTS, FIGQ…TRGE, YMGM…FGLY, YEGN…DDTI, and YEGE…NGDY. Phosphoserine is present on Ser1335. Residues 1513–1657 enclose the VPS9 domain; it reads KQPDIALLGF…YYQIQREKLN (145 aa).

As to quaternary structure, forms a heteromeric complex with ALS2CL. Interacts with ALS2CL.

In terms of biological role, may act as a GTPase regulator. Controls survival and growth of spinal motoneurons. This Homo sapiens (Human) protein is Alsin (ALS2).